A 228-amino-acid polypeptide reads, in one-letter code: Ribose-5-phosphate isomerase A (228 aa).

Residues 28-31, 84-87, and 97-100 contribute to the substrate site; these read TGST, DGAD, and KGGG. The active-site Proton acceptor is the Glu106. Residue Lys124 participates in substrate binding.

This sequence belongs to the ribose 5-phosphate isomerase family. In terms of assembly, homodimer.

The catalysed reaction is aldehydo-D-ribose 5-phosphate = D-ribulose 5-phosphate. It participates in carbohydrate degradation; pentose phosphate pathway; D-ribose 5-phosphate from D-ribulose 5-phosphate (non-oxidative stage): step 1/1. Its function is as follows. Catalyzes the reversible conversion of ribose-5-phosphate to ribulose 5-phosphate. This is Ribose-5-phosphate isomerase A from Levilactobacillus brevis (strain ATCC 367 / BCRC 12310 / CIP 105137 / JCM 1170 / LMG 11437 / NCIMB 947 / NCTC 947) (Lactobacillus brevis).